The following is a 381-amino-acid chain: Opsin Rh2 (381 aa).

Topologically, residues 1–56 (MERSHLPETPFDLAHSGPRFQAQSSGNGSVLDNVLPDMAHLVNPYWSRFAPMDPMM) are extracellular. An N-linked (GlcNAc...) asparagine glycan is attached at N27. The chain crosses the membrane as a helical span at residues 57–81 (SKILGLFTLAIMIISCCGNGVVVYI). Topologically, residues 82–93 (FGGTKSLRTPAN) are cytoplasmic. Residues 94–119 (LLVLNLAFSDFCMMASQSPVMIINFY) form a helical membrane-spanning segment. The Extracellular portion of the chain corresponds to 120–133 (YETWVLGPLWCDIY). C130 and C207 are oxidised to a cystine. A helical membrane pass occupies residues 134–153 (AGCGSLFGCVSIWSMCMIAF). Residues 154–172 (DRYNVIVKGINGTPMTIKT) are Cytoplasmic-facing. The helical transmembrane segment at 173–196 (SIMKILFIWMMAVFWTVMPLIGWS) threads the bilayer. Residues 197–220 (AYVPEGNLTACSIDYMTRMWNPRS) lie on the Extracellular side of the membrane. A helical membrane pass occupies residues 221 to 248 (YLITYSLFVYYTPLFLICYSYWFIIAAV). Topologically, residues 249-283 (AAHEKAMREQAKKMNVKSLRSSEDCDKSAEGKLAK) are cytoplasmic. A helical transmembrane segment spans residues 284–307 (VALTTISLWFMAWTPYLVICYFGL). Residues 308-314 (FKIDGLT) lie on the Extracellular side of the membrane. Residues 315-339 (PLTTIWGATFAKTSAVYNPIVYGIS) form a helical membrane-spanning segment. N6-(retinylidene)lysine is present on K326. Residues 340-381 (HPKYRIVLKEKCPMCVFGNTDEPKPDAPASDTETTSEADSKA) are Cytoplasmic-facing. A disordered region spans residues 359–381 (TDEPKPDAPASDTETTSEADSKA). Residues 370 to 381 (DTETTSEADSKA) show a composition bias toward polar residues.

Belongs to the G-protein coupled receptor 1 family. Opsin subfamily. Phosphorylated on some or all of the serine and threonine residues present in the C-terminal region. As to expression, predominant opsin expressed in the dorsal ocelli.

Its subcellular location is the membrane. In terms of biological role, visual pigments are the light-absorbing molecules that mediate vision. They consist of an apoprotein, opsin, covalently linked to cis-retinal. The protein is Opsin Rh2 (Rh2) of Drosophila melanogaster (Fruit fly).